Consider the following 181-residue polypeptide: Inner membrane-spanning protein YciB (181 aa).

5 helical membrane-spanning segments follow: residues 22–42 (IYTA…VTYA), 50–70 (MQLI…FLHD), 80–100 (IVYC…KPVI), 122–142 (WVLF…EMPL), and 148–168 (FKVF…GMYV).

This sequence belongs to the YciB family.

Its subcellular location is the cell inner membrane. Plays a role in cell envelope biogenesis, maintenance of cell envelope integrity and membrane homeostasis. The chain is Inner membrane-spanning protein YciB from Aliivibrio fischeri (strain ATCC 700601 / ES114) (Vibrio fischeri).